The following is a 788-amino-acid chain: Xylulose-5-phosphate phosphoketolase (788 aa).

Belongs to the XFP family. Homohexamer. It depends on thiamine diphosphate as a cofactor.

It carries out the reaction D-xylulose 5-phosphate + phosphate = acetyl phosphate + D-glyceraldehyde 3-phosphate + H2O. This Lactiplantibacillus pentosus (Lactobacillus pentosus) protein is Xylulose-5-phosphate phosphoketolase (xpkA).